A 287-amino-acid chain; its full sequence is Formamidopyrimidine-DNA glycosylase (287 aa).

The active-site Schiff-base intermediate with DNA is the Pro-2. The active-site Proton donor is Glu-3. The active-site Proton donor; for beta-elimination activity is Lys-61. 3 residues coordinate DNA: His-95, Arg-115, and Arg-157. The segment at Asn-243–Pro-277 adopts an FPG-type zinc-finger fold. The active-site Proton donor; for delta-elimination activity is Arg-267.

This sequence belongs to the FPG family. In terms of assembly, monomer. Requires Zn(2+) as cofactor.

The catalysed reaction is Hydrolysis of DNA containing ring-opened 7-methylguanine residues, releasing 2,6-diamino-4-hydroxy-5-(N-methyl)formamidopyrimidine.. It catalyses the reaction 2'-deoxyribonucleotide-(2'-deoxyribose 5'-phosphate)-2'-deoxyribonucleotide-DNA = a 3'-end 2'-deoxyribonucleotide-(2,3-dehydro-2,3-deoxyribose 5'-phosphate)-DNA + a 5'-end 5'-phospho-2'-deoxyribonucleoside-DNA + H(+). Involved in base excision repair of DNA damaged by oxidation or by mutagenic agents. Acts as a DNA glycosylase that recognizes and removes damaged bases. Has a preference for oxidized purines, such as 7,8-dihydro-8-oxoguanine (8-oxoG). Has AP (apurinic/apyrimidinic) lyase activity and introduces nicks in the DNA strand. Cleaves the DNA backbone by beta-delta elimination to generate a single-strand break at the site of the removed base with both 3'- and 5'-phosphates. This Salinispora arenicola (strain CNS-205) protein is Formamidopyrimidine-DNA glycosylase.